The sequence spans 196 residues: Pycsar effector protein GmPycTM (196 aa).

The next 3 helical transmembrane spans lie at 34 to 54 (ISFS…SGII), 82 to 102 (ITTI…TYLF), and 176 to 196 (VNWL…FLFL).

The protein localises to the cell inner membrane. In terms of biological role, pycsar (pyrimidine cyclase system for antiphage resistance) provides immunity against bacteriophage. The pyrimidine cyclase (PycC) synthesizes cyclic nucleotides in response to infection; these serve as specific second messenger signals. The signals activate the adjacent effector, leading to bacterial cell death and abortive phage infection. A clade C Pycsar system. Functionally, the effector gene of a two-gene Pycsar system. Expression of this and adjacent uridylate cyclase GmPycC (AC P0DV42) probably confers resistance to bacteriophage. The genes are probably only expressed in response to bacteriophage infection. Probably only responds to cUMP (produced by its cognate NTP cyclase), acts by impairing membrane integrity. This Gulbenkiania mobilis protein is Pycsar effector protein GmPycTM.